The sequence spans 280 residues: Bis(5'-nucleosyl)-tetraphosphatase, symmetrical (280 aa).

It belongs to the Ap4A hydrolase family.

The enzyme catalyses P(1),P(4)-bis(5'-adenosyl) tetraphosphate + H2O = 2 ADP + 2 H(+). Hydrolyzes diadenosine 5',5'''-P1,P4-tetraphosphate to yield ADP. This is Bis(5'-nucleosyl)-tetraphosphatase, symmetrical from Shigella boydii serotype 18 (strain CDC 3083-94 / BS512).